The primary structure comprises 59 residues: Large ribosomal subunit protein bL32 (59 aa).

Residues 1–16 (MAVPKRKTSPSRRGMR) are compositionally biased toward basic residues. The disordered stretch occupies residues 1–20 (MAVPKRKTSPSRRGMRRSHD).

It belongs to the bacterial ribosomal protein bL32 family.

The protein is Large ribosomal subunit protein bL32 of Novosphingobium aromaticivorans (strain ATCC 700278 / DSM 12444 / CCUG 56034 / CIP 105152 / NBRC 16084 / F199).